Reading from the N-terminus, the 253-residue chain is Sulfur carrier protein FdhD (253 aa).

The active-site Cysteine persulfide intermediate is the Cys100.

Belongs to the FdhD family.

The protein resides in the cytoplasm. In terms of biological role, required for formate dehydrogenase (FDH) activity. Acts as a sulfur carrier protein that transfers sulfur from IscS to the molybdenum cofactor prior to its insertion into FDH. The polypeptide is Sulfur carrier protein FdhD (Sulfolobus acidocaldarius (strain ATCC 33909 / DSM 639 / JCM 8929 / NBRC 15157 / NCIMB 11770)).